The following is a 273-amino-acid chain: Dermonecrotic toxin LruSicTox-alphaIC1c (273 aa).

His5 is an active-site residue. Positions 25 and 27 each coordinate Mg(2+). The active-site Nucleophile is the His41. 2 cysteine pairs are disulfide-bonded: Cys45/Cys51 and Cys47/Cys190. A Mg(2+)-binding site is contributed by Asp85.

This sequence belongs to the arthropod phospholipase D family. Class II subfamily. Mg(2+) is required as a cofactor. In terms of tissue distribution, expressed by the venom gland.

The protein resides in the secreted. The enzyme catalyses an N-(acyl)-sphingosylphosphocholine = an N-(acyl)-sphingosyl-1,3-cyclic phosphate + choline. It catalyses the reaction an N-(acyl)-sphingosylphosphoethanolamine = an N-(acyl)-sphingosyl-1,3-cyclic phosphate + ethanolamine. It carries out the reaction a 1-acyl-sn-glycero-3-phosphocholine = a 1-acyl-sn-glycero-2,3-cyclic phosphate + choline. The catalysed reaction is a 1-acyl-sn-glycero-3-phosphoethanolamine = a 1-acyl-sn-glycero-2,3-cyclic phosphate + ethanolamine. Dermonecrotic toxins cleave the phosphodiester linkage between the phosphate and headgroup of certain phospholipids (sphingolipid and lysolipid substrates), forming an alcohol (often choline) and a cyclic phosphate. This toxin acts on sphingomyelin (SM). It may also act on ceramide phosphoethanolamine (CPE), lysophosphatidylcholine (LPC) and lysophosphatidylethanolamine (LPE), but not on lysophosphatidylserine (LPS), and lysophosphatidylglycerol (LPG). It acts by transphosphatidylation, releasing exclusively cyclic phosphate products as second products. Induces dermonecrosis, hemolysis, increased vascular permeability, edema, inflammatory response, and platelet aggregation. The protein is Dermonecrotic toxin LruSicTox-alphaIC1c of Loxosceles rufescens (Mediterranean recluse spider).